The chain runs to 202 residues: Recombination protein RecR (202 aa).

A C4-type zinc finger spans residues 58-73 (CANCGNLTDKKLCDIC). The Toprim domain occupies 81–178 (SVITVVEDSM…KVSRIAMGVP (98 aa)).

This sequence belongs to the RecR family.

Functionally, may play a role in DNA repair. It seems to be involved in an RecBC-independent recombinational process of DNA repair. It may act with RecF and RecO. The polypeptide is Recombination protein RecR (Finegoldia magna (strain ATCC 29328 / DSM 20472 / WAL 2508) (Peptostreptococcus magnus)).